Consider the following 435-residue polypeptide: Bifunctional protein GlmU (435 aa).

A pyrophosphorylase region spans residues 1–224 (MNDTSIIILA…EQNFMGINDK (224 aa)). Residues 9-12 (LAAG), K23, Q75, and 82-83 (GT) contribute to the UDP-N-acetyl-alpha-D-glucosamine site. D103 lines the Mg(2+) pocket. Residues G136, E150, N165, and N222 each contribute to the UDP-N-acetyl-alpha-D-glucosamine site. Residue N222 participates in Mg(2+) binding. The segment at 225 to 245 (FQLSVAEKIMQDEIKQDLMKA) is linker. An N-acetyltransferase region spans residues 246-435 (GVLMRLPESI…KFFGKNNAEK (190 aa)). 2 residues coordinate UDP-N-acetyl-alpha-D-glucosamine: R309 and K326. H337 acts as the Proton acceptor in catalysis. UDP-N-acetyl-alpha-D-glucosamine contacts are provided by Y340 and N351. Residues 360 to 361 (NY), S379, A397, and R414 each bind acetyl-CoA.

This sequence in the N-terminal section; belongs to the N-acetylglucosamine-1-phosphate uridyltransferase family. It in the C-terminal section; belongs to the transferase hexapeptide repeat family. Homotrimer. It depends on Mg(2+) as a cofactor.

It is found in the cytoplasm. The catalysed reaction is alpha-D-glucosamine 1-phosphate + acetyl-CoA = N-acetyl-alpha-D-glucosamine 1-phosphate + CoA + H(+). It catalyses the reaction N-acetyl-alpha-D-glucosamine 1-phosphate + UTP + H(+) = UDP-N-acetyl-alpha-D-glucosamine + diphosphate. It participates in nucleotide-sugar biosynthesis; UDP-N-acetyl-alpha-D-glucosamine biosynthesis; N-acetyl-alpha-D-glucosamine 1-phosphate from alpha-D-glucosamine 6-phosphate (route II): step 2/2. It functions in the pathway nucleotide-sugar biosynthesis; UDP-N-acetyl-alpha-D-glucosamine biosynthesis; UDP-N-acetyl-alpha-D-glucosamine from N-acetyl-alpha-D-glucosamine 1-phosphate: step 1/1. The protein operates within bacterial outer membrane biogenesis; LPS lipid A biosynthesis. In terms of biological role, catalyzes the last two sequential reactions in the de novo biosynthetic pathway for UDP-N-acetylglucosamine (UDP-GlcNAc). The C-terminal domain catalyzes the transfer of acetyl group from acetyl coenzyme A to glucosamine-1-phosphate (GlcN-1-P) to produce N-acetylglucosamine-1-phosphate (GlcNAc-1-P), which is converted into UDP-GlcNAc by the transfer of uridine 5-monophosphate (from uridine 5-triphosphate), a reaction catalyzed by the N-terminal domain. This chain is Bifunctional protein GlmU, found in Campylobacter curvus (strain 525.92).